Consider the following 511-residue polypeptide: Ribose import ATP-binding protein RbsA (511 aa).

ABC transporter domains follow at residues 9–245 (FEAK…VGRD) and 261–506 (LRAE…LPRR). 41 to 48 (GENGAGKS) serves as a coordination point for ATP.

This sequence belongs to the ABC transporter superfamily. Ribose importer (TC 3.A.1.2.1) family. As to quaternary structure, the complex is composed of an ATP-binding protein (RbsA), two transmembrane proteins (RbsC) and a solute-binding protein (RbsB).

It is found in the cell inner membrane. It carries out the reaction D-ribose(out) + ATP + H2O = D-ribose(in) + ADP + phosphate + H(+). In terms of biological role, part of the ABC transporter complex RbsABC involved in ribose import. Responsible for energy coupling to the transport system. The chain is Ribose import ATP-binding protein RbsA from Rhodopirellula baltica (strain DSM 10527 / NCIMB 13988 / SH1).